A 397-amino-acid chain; its full sequence is uncharacterized protein (397 aa).

[4Fe-4S] cluster is bound by residues Cys8, Cys14, Cys17, and Cys95. The S-adenosyl-L-methionine site is built by Gln229, Tyr258, Glu279, and Asp325. The Nucleophile role is filled by Cys352.

Belongs to the class I-like SAM-binding methyltransferase superfamily. RNA M5U methyltransferase family.

This is an uncharacterized protein from Chlamydia muridarum (strain MoPn / Nigg).